The following is a 340-amino-acid chain: Protein-arginine kinase (340 aa).

Positions 21–242 (VVLSSRIRLA…EQIIMQERVA (222 aa)) constitute a Phosphagen kinase C-terminal domain. ATP is bound by residues 24–28 (SSRIR), H79, R113, 164–168 (RASVM), and 195–200 (RGIYGE).

This sequence belongs to the ATP:guanido phosphotransferase family.

It carries out the reaction L-arginyl-[protein] + ATP = N(omega)-phospho-L-arginyl-[protein] + ADP + H(+). Functionally, catalyzes the specific phosphorylation of arginine residues in proteins. In Listeria monocytogenes serotype 4b (strain CLIP80459), this protein is Protein-arginine kinase.